Here is a 317-residue protein sequence, read N- to C-terminus: Ataxin-3 homolog (317 aa).

A Josephin domain is found at 7 to 178 (INSIFFEHQE…RSDADDLISL (172 aa)). The active-site Nucleophile is the Cys-20. The active-site Proton acceptor is His-117. The active site involves Asn-132. 2 UIM domains span residues 219–239 (SQEE…KDGS) and 247–264 (EIDE…QAPG). Positions 254–317 (RKAIELSQAP…KKKEERNDEK (64 aa)) are disordered. The segment covering 276–293 (RSRSSTPPGASEPFSNAE) has biased composition (polar residues). Positions 294-317 (QQRRDRQKFLERFEKKKEERNDEK) are enriched in basic and acidic residues. The interaction with cdc-48.1 and cdc-48.2 stretch occupies residues 296-299 (RRDR).

As to quaternary structure, forms a complex composed of deubiquitinating enzyme atx-3, adapter ubxn-5 and cdc-48.1. Forms a complex composed of deubiquitinating enzyme atx-3, E4 ubiquitin-protein ligase ufd-2 and cdc-48.1. Interacts (via RRDR motif) with cdc-48.1 (via N-terminus) and cdc-48.2 (via N-terminus); the interaction with cdc-48.1 is not required for atx-3 enzymatic activity. Interacts (via C-terminus) with ubxn-5. May interact with ned-8. In terms of tissue distribution, expressed in germline (at protein level). Expressed in spermatheca, pharynx, dorsal and ventral cords, some head neurons, hypodermis, body wall muscles and coelomocytes.

The protein resides in the cytoplasm. Its subcellular location is the nucleus. It is found in the nucleolus. The enzyme catalyses Thiol-dependent hydrolysis of ester, thioester, amide, peptide and isopeptide bonds formed by the C-terminal Gly of ubiquitin (a 76-residue protein attached to proteins as an intracellular targeting signal).. In terms of biological role, acts as a chain editing deubiquitinating enzyme that binds and cleaves 'Lys-48'-linked polyubiquitin chains, with a preference for chains containing four or more ubiquitin molecules thereby modulating protein degradation by the ubiquitin-proteasome pathway. Probably by regulating the IGF-1-insulin-like pathway, regulates lifespan. Regulates germline DNA double-strand-break repair and apoptosis in response to DNA damage by recruiting E4 ubiquitin-protein ligase ufd-2 to DNA repair foci. Interacts with key regulators of transcription and represses transcription. Acts as a histone-binding protein that regulates transcription. In Caenorhabditis elegans, this protein is Ataxin-3 homolog (atx-3).